Here is a 141-residue protein sequence, read N- to C-terminus: MQLTNFTDFGLRALIYLASLPKGELTSITVVTETFDVSRNHMVKIINKLGQEGFIKTVRGKNGGICLGRPADQIIIGEVIRSIEPFNIVNCAPEFCHITPACRLKTALAKAKQAFLDELDQHTIQDMLTENNELLILLKRV.

The region spanning 2–129 is the HTH rrf2-type domain; sequence QLTNFTDFGL…DQHTIQDMLT (128 aa). Positions 28 to 51 form a DNA-binding region, H-T-H motif; it reads ITVVTETFDVSRNHMVKIINKLGQ. The [2Fe-2S] cluster site is built by Cys-91, Cys-96, and Cys-102.

It depends on [2Fe-2S] cluster as a cofactor.

Functionally, nitric oxide-sensitive repressor of genes involved in protecting the cell against nitrosative stress. May require iron for activity. This chain is HTH-type transcriptional repressor NsrR, found in Aliivibrio salmonicida (strain LFI1238) (Vibrio salmonicida (strain LFI1238)).